The sequence spans 775 residues: uncharacterized protein (775 aa).

5 helical membrane-spanning segments follow: residues 16–36 (KLLI…GVFL), 585–605 (PYIL…VFPL), 625–645 (VMML…LLGI), 655–675 (FYVF…FLAT), and 742–762 (GVLI…FTML).

This sequence to L.lactis phage infection protein (PIP).

The protein localises to the cell membrane. This is an uncharacterized protein from Bacillus subtilis (strain 168).